Consider the following 195-residue polypeptide: Small ribosomal subunit protein uS4 (195 aa).

In terms of domain architecture, S4 RNA-binding spans S92 to N152.

This sequence belongs to the universal ribosomal protein uS4 family. As to quaternary structure, part of the 30S ribosomal subunit. Contacts protein S5. The interaction surface between S4 and S5 is involved in control of translational fidelity.

Its function is as follows. One of the primary rRNA binding proteins, it binds directly to 16S rRNA where it nucleates assembly of the body of the 30S subunit. In terms of biological role, with S5 and S12 plays an important role in translational accuracy. The polypeptide is Small ribosomal subunit protein uS4 (Karelsulcia muelleri (strain GWSS) (Sulcia muelleri)).